The chain runs to 520 residues: mRNA-capping enzyme subunit beta (520 aa).

The disordered stretch occupies residues M1–D185. 2 stretches are compositionally biased toward polar residues: residues P11 to D21 and I44 to T56. The segment covering S92 to P108 has biased composition (low complexity). 2 stretches are compositionally biased toward basic and acidic residues: residues P126–E135 and K149–P176.

Belongs to the fungal TPase family. As to quaternary structure, heterodimer. The mRNA-capping enzyme is composed of two separate chains alpha and beta, respectively a mRNA guanylyltransferase and an mRNA 5'-triphosphate monophosphatase. Mg(2+) serves as cofactor.

The protein localises to the nucleus. It carries out the reaction a 5'-end triphospho-ribonucleoside in mRNA + H2O = a 5'-end diphospho-ribonucleoside in mRNA + phosphate + H(+). Its function is as follows. First step of mRNA capping. Converts the 5'-triphosphate end of a nascent mRNA chain into a diphosphate end. The protein is mRNA-capping enzyme subunit beta (CET1) of Candida albicans (strain SC5314 / ATCC MYA-2876) (Yeast).